Consider the following 122-residue polypeptide: Large ribosomal subunit protein uL14 (122 aa).

It belongs to the universal ribosomal protein uL14 family. In terms of assembly, part of the 50S ribosomal subunit. Forms a cluster with proteins L3 and L19. In the 70S ribosome, L14 and L19 interact and together make contacts with the 16S rRNA in bridges B5 and B8.

Functionally, binds to 23S rRNA. Forms part of two intersubunit bridges in the 70S ribosome. This chain is Large ribosomal subunit protein uL14, found in Brevibacillus brevis (strain 47 / JCM 6285 / NBRC 100599).